The primary structure comprises 126 residues: Large ribosomal subunit protein bL20 (126 aa).

This sequence belongs to the bacterial ribosomal protein bL20 family.

In terms of biological role, binds directly to 23S ribosomal RNA and is necessary for the in vitro assembly process of the 50S ribosomal subunit. It is not involved in the protein synthesizing functions of that subunit. This chain is Large ribosomal subunit protein bL20, found in Frankia casuarinae (strain DSM 45818 / CECT 9043 / HFP020203 / CcI3).